The following is a 675-amino-acid chain: Methionine--tRNA ligase (675 aa).

Positions 15–25 (PYANGPIHLGH) match the 'HIGH' region motif. The Zn(2+) site is built by cysteine 146, cysteine 149, cysteine 159, and cysteine 162. Positions 332–336 (KMSKS) match the 'KMSKS' region motif. Lysine 335 contacts ATP. The region spanning 574-675 (DFAKIDLRVA…AGAKPGMRVK (102 aa)) is the tRNA-binding domain.

The protein belongs to the class-I aminoacyl-tRNA synthetase family. MetG type 1 subfamily. As to quaternary structure, homodimer. Zn(2+) serves as cofactor.

It localises to the cytoplasm. It catalyses the reaction tRNA(Met) + L-methionine + ATP = L-methionyl-tRNA(Met) + AMP + diphosphate. Is required not only for elongation of protein synthesis but also for the initiation of all mRNA translation through initiator tRNA(fMet) aminoacylation. This chain is Methionine--tRNA ligase, found in Shewanella amazonensis (strain ATCC BAA-1098 / SB2B).